The sequence spans 104 residues: Flagellar hook-basal body complex protein FliE (104 aa).

It belongs to the FliE family.

It is found in the bacterial flagellum basal body. The polypeptide is Flagellar hook-basal body complex protein FliE (Serratia proteamaculans (strain 568)).